The primary structure comprises 368 residues: Histidinol-phosphate aminotransferase (368 aa).

N6-(pyridoxal phosphate)lysine is present on Lys224.

Belongs to the class-II pyridoxal-phosphate-dependent aminotransferase family. Histidinol-phosphate aminotransferase subfamily. Homodimer. Pyridoxal 5'-phosphate is required as a cofactor.

It carries out the reaction L-histidinol phosphate + 2-oxoglutarate = 3-(imidazol-4-yl)-2-oxopropyl phosphate + L-glutamate. It participates in amino-acid biosynthesis; L-histidine biosynthesis; L-histidine from 5-phospho-alpha-D-ribose 1-diphosphate: step 7/9. The sequence is that of Histidinol-phosphate aminotransferase from Agrobacterium fabrum (strain C58 / ATCC 33970) (Agrobacterium tumefaciens (strain C58)).